Reading from the N-terminus, the 125-residue chain is Holo-[acyl-carrier-protein] synthase (125 aa).

Residues Asp-8 and Glu-57 each coordinate Mg(2+).

This sequence belongs to the P-Pant transferase superfamily. AcpS family. It depends on Mg(2+) as a cofactor.

It localises to the cytoplasm. The enzyme catalyses apo-[ACP] + CoA = holo-[ACP] + adenosine 3',5'-bisphosphate + H(+). Functionally, transfers the 4'-phosphopantetheine moiety from coenzyme A to a Ser of acyl-carrier-protein. In Solibacter usitatus (strain Ellin6076), this protein is Holo-[acyl-carrier-protein] synthase.